Reading from the N-terminus, the 483-residue chain is Zinc metalloproteinase/disintegrin (483 aa).

A signal peptide spans 1-20 (MIQVLLVTLCLAAFPYQGSS). Positions 21–190 (IILESGNVND…KKASQLNLTP (170 aa)) are excised as a propeptide. The Peptidase M12B domain occupies 198 to 394 (RYIELVVVAD…HNPQCMLNEP (197 aa)). Ca(2+) contacts are provided by Glu201 and Asp285. 3 disulfide bridges follow: Cys309-Cys389, Cys349-Cys373, and Cys351-Cys356. His334 contacts Zn(2+). Glu335 is a catalytic residue. Residues His338 and His344 each contribute to the Zn(2+) site. Ca(2+) is bound by residues Cys389 and Asn392. Positions 395-418 (LRTDIVSTPVSGNELLETGEESDF) are excised as a propeptide. The region spanning 402–483 (TPVSGNELLE…AGCPRNPFHA (82 aa)) is the Disintegrin domain. 4 disulfides stabilise this stretch: Cys425–Cys448, Cys439–Cys445, Cys444–Cys469, and Cys457–Cys476. The Cell attachment site signature appears at 461 to 463 (RGD).

This sequence belongs to the venom metalloproteinase (M12B) family. P-II subfamily. P-IId sub-subfamily. As to quaternary structure, homodimer; disulfide-linked (disintegrin). It depends on Zn(2+) as a cofactor. As to expression, expressed by the venom gland.

Its subcellular location is the secreted. Functionally, impairs hemostasis in the envenomed animal. This protein has not been identified in the venom. Its function is as follows. Inhibits ADP-induced platelet aggregation. Binds and inhibits integrins GPIIb/GPIIIa (ITGA2B/ITGB3), alpha-5/beta-1 (ITGA5/ITGB1), alpha-V/beta-3 (ITGAV/ITGB3), and alpha-V/beta-5 (ITGAV/ITGB5). It blocks cancer cell adhesion (tested on human breast cancer cell line MDA-MB-435) to fibronectin and vitronectin and thus prevents invasion of cancer cells. The polypeptide is Zinc metalloproteinase/disintegrin (Agkistrodon contortrix contortrix (Southern copperhead)).